A 292-amino-acid polypeptide reads, in one-letter code: Acetyl-coenzyme A carboxylase carboxyl transferase subunit beta (292 aa).

The CoA carboxyltransferase N-terminal domain maps to 29-292 (LWVKCSECGQ…HGVKDLMGAN (264 aa)). Cys33, Cys36, Cys52, and Cys55 together coordinate Zn(2+). The C4-type zinc-finger motif lies at 33-55 (CSECGQVAYRKDLISNFNVCSNC).

This sequence belongs to the AccD/PCCB family. Acetyl-CoA carboxylase is a heterohexamer composed of biotin carboxyl carrier protein (AccB), biotin carboxylase (AccC) and two subunits each of ACCase subunit alpha (AccA) and ACCase subunit beta (AccD). The cofactor is Zn(2+).

The protein resides in the cytoplasm. The catalysed reaction is N(6)-carboxybiotinyl-L-lysyl-[protein] + acetyl-CoA = N(6)-biotinyl-L-lysyl-[protein] + malonyl-CoA. The protein operates within lipid metabolism; malonyl-CoA biosynthesis; malonyl-CoA from acetyl-CoA: step 1/1. Component of the acetyl coenzyme A carboxylase (ACC) complex. Biotin carboxylase (BC) catalyzes the carboxylation of biotin on its carrier protein (BCCP) and then the CO(2) group is transferred by the transcarboxylase to acetyl-CoA to form malonyl-CoA. The protein is Acetyl-coenzyme A carboxylase carboxyl transferase subunit beta of Prochlorococcus marinus (strain MIT 9515).